Consider the following 744-residue polypeptide: Probable ubiquitin carboxyl-terminal hydrolase MINDY-4 (744 aa).

Phosphoserine occurs at positions 143, 220, and 224. The segment at 211–358 (GMMAGPVASS…QLVSDRTDDK (148 aa)) is disordered. The span at 265–277 (VPDSSSDSVSRSP) shows a compositional bias: low complexity. Positions 290–299 (NVTSSSQGLS) are enriched in polar residues. Residue Ser-295 is modified to Phosphoserine. Residues 300–310 (QRDRPRLRSVS) show a composition bias toward basic and acidic residues. Cys-443 functions as the Nucleophile in the catalytic mechanism. The active-site Proton acceptor is His-664.

This sequence belongs to the MINDY deubiquitinase family. FAM188 subfamily.

The catalysed reaction is Thiol-dependent hydrolysis of ester, thioester, amide, peptide and isopeptide bonds formed by the C-terminal Gly of ubiquitin (a 76-residue protein attached to proteins as an intracellular targeting signal).. Its function is as follows. Probable hydrolase that can remove 'Lys-48'-linked conjugated ubiquitin from proteins. The protein is Probable ubiquitin carboxyl-terminal hydrolase MINDY-4 (Mindy4) of Mus musculus (Mouse).